The following is a 143-amino-acid chain: Flagellar assembly factor FliW (143 aa).

This sequence belongs to the FliW family. Interacts with translational regulator CsrA and flagellin(s).

It is found in the cytoplasm. Functionally, acts as an anti-CsrA protein, binds CsrA and prevents it from repressing translation of its target genes, one of which is flagellin. Binds to flagellin and participates in the assembly of the flagellum. The protein is Flagellar assembly factor FliW of Clostridium botulinum (strain ATCC 19397 / Type A).